We begin with the raw amino-acid sequence, 898 residues long: Probable LRR receptor-like serine/threonine-protein kinase At4g20450 (898 aa).

Positions 1 to 24 (MEGIHKLIFLALIWIFLITNIVDA) are cleaved as a signal peptide. Residues 25-535 (QDQQGFISLD…TGPGNNKKKL (511 aa)) lie on the Extracellular side of the membrane. N-linked (GlcNAc...) asparagine glycosylation is found at Asn40, Asn52, Asn98, Asn247, Asn253, Asn420, Asn443, Asn465, Asn484, and Asn489. 3 LRR repeats span residues 455 to 477 (QLQKLDLSNNNLTGKVPEFLAKM), 479 to 501 (LLTFINLSGNNLSGSIPQSLLNM), and 505 to 526 (GLITLLYNGNNLCLDPSCESET). Residues 536–556 (LVPILASAASVGIIIAVLLLV) traverse the membrane as a helical segment. The Cytoplasmic portion of the chain corresponds to 557–898 (NILLLRKKKP…FGPEHIPDAR (342 aa)). Residue Thr582 is modified to Phosphothreonine. One can recognise a Protein kinase domain in the interval 591–864 (NNFERPLGEG…QVANELQECL (274 aa)). ATP is bound by residues 597–605 (LGEGGFGVV) and Lys619. Tyr664 bears the Phosphotyrosine mark. The active-site Proton acceptor is the Asp716. A Phosphoserine modification is found at Ser750. Thr751 carries the phosphothreonine modification. Phosphotyrosine is present on Tyr764. Residues 864 to 898 (LLTENSRKGGRHDVDSKSSLEQSTSFGPEHIPDAR) are disordered. Basic and acidic residues predominate over residues 868–881 (NSRKGGRHDVDSKS).

It belongs to the protein kinase superfamily. Ser/Thr protein kinase family.

Its subcellular location is the membrane. The catalysed reaction is L-seryl-[protein] + ATP = O-phospho-L-seryl-[protein] + ADP + H(+). The enzyme catalyses L-threonyl-[protein] + ATP = O-phospho-L-threonyl-[protein] + ADP + H(+). The protein is Probable LRR receptor-like serine/threonine-protein kinase At4g20450 of Arabidopsis thaliana (Mouse-ear cress).